The chain runs to 1370 residues: DNA-directed RNA polymerase subunit beta (1370 aa).

Belongs to the RNA polymerase beta chain family. The RNAP catalytic core consists of 2 alpha, 1 beta, 1 beta' and 1 omega subunit. When a sigma factor is associated with the core the holoenzyme is formed, which can initiate transcription.

The enzyme catalyses RNA(n) + a ribonucleoside 5'-triphosphate = RNA(n+1) + diphosphate. Functionally, DNA-dependent RNA polymerase catalyzes the transcription of DNA into RNA using the four ribonucleoside triphosphates as substrates. The protein is DNA-directed RNA polymerase subunit beta of Verminephrobacter eiseniae (strain EF01-2).